A 75-amino-acid polypeptide reads, in one-letter code: Stewaprin-a (75 aa).

Positions 1–24 (MSSGGLLLLLGLLTLWAELIPVSG) are cleaved as a signal peptide. In terms of domain architecture, WAP spans 27 to 72 (HPKKPGLCPPRPQKPPCVRECKNDWSCPGEQKCCRYGCIFECRDPI). Disulfide bonds link Cys-34/Cys-60, Cys-43/Cys-64, Cys-47/Cys-59, and Cys-53/Cys-68.

It belongs to the venom waprin family. Expressed by the venom gland.

The protein localises to the secreted. Its function is as follows. Damages membranes of susceptible bacteria. Has no hemolytic activity. Not toxic to mice. Does not inhibit the proteinases elastase and cathepsin G. The chain is Stewaprin-a from Hoplocephalus stephensii (Stephens's banded snake).